A 796-amino-acid polypeptide reads, in one-letter code: Leucine--tRNA ligase (796 aa).

The 'HIGH' region motif lies at 40-51; that stretch reads PYPSASGLHVGH. The 'KMSKS' region signature appears at 569–573; the sequence is KMSKS. Position 572 (lysine 572) interacts with ATP.

It belongs to the class-I aminoacyl-tRNA synthetase family.

It localises to the cytoplasm. It carries out the reaction tRNA(Leu) + L-leucine + ATP = L-leucyl-tRNA(Leu) + AMP + diphosphate. This is Leucine--tRNA ligase from Bdellovibrio bacteriovorus (strain ATCC 15356 / DSM 50701 / NCIMB 9529 / HD100).